A 344-amino-acid chain; its full sequence is Uroporphyrinogen decarboxylase (344 aa).

Substrate is bound by residues 26–30 (RQAGR), Asp75, Tyr150, Ser205, and His323.

The protein belongs to the uroporphyrinogen decarboxylase family. Homodimer.

The protein resides in the cytoplasm. The catalysed reaction is uroporphyrinogen III + 4 H(+) = coproporphyrinogen III + 4 CO2. It functions in the pathway porphyrin-containing compound metabolism; protoporphyrin-IX biosynthesis; coproporphyrinogen-III from 5-aminolevulinate: step 4/4. In terms of biological role, catalyzes the decarboxylation of four acetate groups of uroporphyrinogen-III to yield coproporphyrinogen-III. The polypeptide is Uroporphyrinogen decarboxylase (Corynebacterium diphtheriae (strain ATCC 700971 / NCTC 13129 / Biotype gravis)).